Reading from the N-terminus, the 364-residue chain is Aminomethyltransferase (364 aa).

The protein belongs to the GcvT family. The glycine cleavage system is composed of four proteins: P, T, L and H.

The enzyme catalyses N(6)-[(R)-S(8)-aminomethyldihydrolipoyl]-L-lysyl-[protein] + (6S)-5,6,7,8-tetrahydrofolate = N(6)-[(R)-dihydrolipoyl]-L-lysyl-[protein] + (6R)-5,10-methylene-5,6,7,8-tetrahydrofolate + NH4(+). In terms of biological role, the glycine cleavage system catalyzes the degradation of glycine. The chain is Aminomethyltransferase from Shewanella woodyi (strain ATCC 51908 / MS32).